Here is a 207-residue protein sequence, read N- to C-terminus: Small ribosomal subunit protein uS4c (207 aa).

Residues 92–156 form the S4 RNA-binding domain; that stretch reads MRLDNILFRL…YQSIITKRIE (65 aa).

The protein belongs to the universal ribosomal protein uS4 family. Part of the 30S ribosomal subunit. Contacts protein S5. The interaction surface between S4 and S5 is involved in control of translational fidelity.

It is found in the plastid. The protein resides in the chloroplast. Its function is as follows. One of the primary rRNA binding proteins, it binds directly to 16S rRNA where it nucleates assembly of the body of the 30S subunit. With S5 and S12 plays an important role in translational accuracy. The sequence is that of Small ribosomal subunit protein uS4c (rps4) from Equisetum sylvaticum (Wood horsetail).